The primary structure comprises 76 residues: Conotoxin Cal5a L1 (76 aa).

A signal peptide spans 1–22 (MRFYIGLMAALMLTSILRTDSA). Positions 23–42 (SVDQTGAEGGLALIERVIRQ) are excised as a propeptide. Pro50 is subject to 4-hydroxyproline. 4-hydroxyproline; in form cal5a, and form cal5b is present on Pro58. Pro62 carries the post-translational modification 4-hydroxyproline; in form cal5a, form cal5b, and form cal5c. Pro64 is subject to 4-hydroxyproline; in form cal5a, form cal5b, form cal5c, and form cal5d.

Contains 2 disulfide bonds that can be either 'C1-C3, C2-C4' or 'C1-C4, C2-C3', since these disulfide connectivities have been observed for conotoxins with cysteine framework V (for examples, see AC P0DQQ7 and AC P81755). In terms of processing, five different peptides have been described after total venom examination by HPLC-MS. Cal5a is the longest. Cal5b-Cal5e are identical in length but are differentially hydroxylated. It is possible that hydroxylation and proteolysis at position 53 are incomplete in some of these peptides. As to expression, expressed by the venom duct.

It localises to the secreted. Probable neurotoxin with unknown target. Possibly targets ion channels. In Californiconus californicus (California cone), this protein is Conotoxin Cal5a L1.